The chain runs to 480 residues: Cytochrome b-c1 complex subunit 1, mitochondrial (480 aa).

The N-terminal 34 residues, 1–34 (MAASVVCRAATAGAQVLLRARRSPALLRTPALRS), are a transit peptide targeting the mitochondrion. N6-acetyllysine occurs at positions 111 and 138. Lysine 163 carries the N6-acetyllysine; alternate modification. The residue at position 163 (lysine 163) is an N6-succinyllysine; alternate. Serine 212 is subject to Phosphoserine. Lysine 248 bears the N6-acetyllysine mark.

It belongs to the peptidase M16 family. UQCRC1/QCR1 subfamily. As to quaternary structure, component of the ubiquinol-cytochrome c oxidoreductase (cytochrome b-c1 complex, complex III, CIII), a multisubunit enzyme composed of 11 subunits. The complex is composed of 3 respiratory subunits cytochrome b, cytochrome c1 and Rieske protein UQCRFS1, 2 core protein subunits UQCRC1/QCR1 and UQCRC2/QCR2, and 6 low-molecular weight protein subunits UQCRH/QCR6, UQCRB/QCR7, UQCRQ/QCR8, UQCR10/QCR9, UQCR11/QCR10 and subunit 9, the cleavage product of Rieske protein UQCRFS1. The complex exists as an obligatory dimer and forms supercomplexes (SCs) in the inner mitochondrial membrane with NADH-ubiquinone oxidoreductase (complex I, CI) and cytochrome c oxidase (complex IV, CIV), resulting in different assemblies (supercomplex SCI(1)III(2)IV(1) and megacomplex MCI(2)III(2)IV(2)). Interacts with UQCC6. Interacts with STMP1. As to expression, expressed in brain, including substantia nigra, striatum, cortex and cerebellum, and in spinal cord, heart, kidney, liver and muscle.

The protein localises to the mitochondrion inner membrane. Its function is as follows. Component of the ubiquinol-cytochrome c oxidoreductase, a multisubunit transmembrane complex that is part of the mitochondrial electron transport chain which drives oxidative phosphorylation. The respiratory chain contains 3 multisubunit complexes succinate dehydrogenase (complex II, CII), ubiquinol-cytochrome c oxidoreductase (cytochrome b-c1 complex, complex III, CIII) and cytochrome c oxidase (complex IV, CIV), that cooperate to transfer electrons derived from NADH and succinate to molecular oxygen, creating an electrochemical gradient over the inner membrane that drives transmembrane transport and the ATP synthase. The cytochrome b-c1 complex catalyzes electron transfer from ubiquinol to cytochrome c, linking this redox reaction to translocation of protons across the mitochondrial inner membrane, with protons being carried across the membrane as hydrogens on the quinol. In the process called Q cycle, 2 protons are consumed from the matrix, 4 protons are released into the intermembrane space and 2 electrons are passed to cytochrome c. The 2 core subunits UQCRC1/QCR1 and UQCRC2/QCR2 are homologous to the 2 mitochondrial-processing peptidase (MPP) subunits beta-MPP and alpha-MPP respectively, and they seem to have preserved their MPP processing properties. May be involved in the in situ processing of UQCRFS1 into the mature Rieske protein and its mitochondrial targeting sequence (MTS)/subunit 9 when incorporated into complex III. Seems to play an important role in the maintenance of proper mitochondrial function in nigral dopaminergic neurons. In Homo sapiens (Human), this protein is Cytochrome b-c1 complex subunit 1, mitochondrial (UQCRC1).